The sequence spans 247 residues: 1-(5-phosphoribosyl)-5-[(5-phosphoribosylamino)methylideneamino] imidazole-4-carboxamide isomerase (247 aa).

The active-site Proton acceptor is D8. D131 acts as the Proton donor in catalysis.

This sequence belongs to the HisA/HisF family.

The protein resides in the cytoplasm. The catalysed reaction is 1-(5-phospho-beta-D-ribosyl)-5-[(5-phospho-beta-D-ribosylamino)methylideneamino]imidazole-4-carboxamide = 5-[(5-phospho-1-deoxy-D-ribulos-1-ylimino)methylamino]-1-(5-phospho-beta-D-ribosyl)imidazole-4-carboxamide. The protein operates within amino-acid biosynthesis; L-histidine biosynthesis; L-histidine from 5-phospho-alpha-D-ribose 1-diphosphate: step 4/9. The chain is 1-(5-phosphoribosyl)-5-[(5-phosphoribosylamino)methylideneamino] imidazole-4-carboxamide isomerase from Ralstonia pickettii (strain 12J).